Consider the following 213-residue polypeptide: Reticulon-3 (213 aa).

A compositionally biased stretch (polar residues) spans 1–16 (MADTSGPQSSHISSSA). The segment at 1-20 (MADTSGPQSSHISSSAGEKG) is disordered. One can recognise a Reticulon domain in the interval 25–213 (VQDLLYWRDV…LPGALKKKSE (189 aa)). Helical transmembrane passes span 45–65 (MVLLLSLAAFSIISVISYLVL) and 154–174 (VFNGITLLILGVLLAFTAPIV).

Homodimer.

The protein resides in the endoplasmic reticulum membrane. It localises to the golgi apparatus membrane. In terms of biological role, may be involved in membrane trafficking in the early secretory pathway. The chain is Reticulon-3 (rtn3) from Xenopus tropicalis (Western clawed frog).